The primary structure comprises 999 residues: Probable hemoglobin and hemoglobin-haptoglobin-binding protein 4 (999 aa).

Positions 1–24 (MTNFRLNVLAYSVMLGLTASVAYA) are cleaved as a signal peptide. Residues 25–52 (EPTNQPTNQPTNQPTNQPTNQPTNQNSN) form a disordered region. Tandem repeats lie at residues 26-29 (PTNQ), 30-33 (PTNQ), 34-37 (PTNQ), 38-41 (PTNQ), 42-45 (PTNQ), and 46-49 (PTNQ). The interval 26 to 49 (PTNQPTNQPTNQPTNQPTNQPTNQ) is 6 X 4 AA tandem repeats of P-T-N-Q. A compositionally biased stretch (low complexity) spans 26–50 (PTNQPTNQPTNQPTNQPTNQPTNQN). The short motif at 58–65 (EQINVLGS) is the TonB box element. Residues 68–195 (NNDNTPPKIA…LGGAVLFETK (128 aa)) form the TBDR plug domain. Residues 203 to 999 (EKDWHIGYKA…NYKLSAEITF (797 aa)) form the TBDR beta-barrel domain. The short motif at 982-999 (NRFYSPGRNYKLSAEITF) is the TonB C-terminal box element.

It belongs to the TonB-dependent receptor family. Hemoglobin/haptoglobin binding protein subfamily.

It localises to the cell outer membrane. Functionally, acts as a receptor for hemoglobin or the hemoglobin/haptoglobin complex of the human host and is required for heme uptake. This chain is Probable hemoglobin and hemoglobin-haptoglobin-binding protein 4, found in Haemophilus influenzae (strain ATCC 51907 / DSM 11121 / KW20 / Rd).